We begin with the raw amino-acid sequence, 113 residues long: Nucleoid-associated protein SAV_4556 (113 aa).

It belongs to the YbaB/EbfC family. In terms of assembly, homodimer.

The protein resides in the cytoplasm. It is found in the nucleoid. Its function is as follows. Binds to DNA and alters its conformation. May be involved in regulation of gene expression, nucleoid organization and DNA protection. This is Nucleoid-associated protein SAV_4556 from Streptomyces avermitilis (strain ATCC 31267 / DSM 46492 / JCM 5070 / NBRC 14893 / NCIMB 12804 / NRRL 8165 / MA-4680).